A 603-amino-acid chain; its full sequence is Golgin subfamily A member 8B (603 aa).

Disordered regions lie at residues 1-82 (MAEE…NSRS), 95-125 (LKQQ…ELEG), 398-419 (TSAE…ESSG), and 460-492 (PGDS…GAAG). Over residues 46–66 (AASGGCHSSEASSSASSSLHA) the composition is skewed to low complexity. The span at 69–82 (SPCQEQAAVLNSRS) shows a compositional bias: polar residues. Coiled coils occupy residues 82-173 (SIKI…GELE) and 212-440 (LKGH…LELG). Basic and acidic residues predominate over residues 100–124 (KQVEHQLEEEKKANNEKQKAERELE). Gly residues predominate over residues 469–482 (PGGGHHQAGPGQGG). Positions 491 to 603 (AGDGVAACGS…CWAWLPRRRR (113 aa)) are golgi-targeting domain.

This sequence belongs to the GOLGA8 family. In terms of tissue distribution, highly expressed in brain, heart and kidney. Detected at lower levels in liver, thymus, spleen, lung and peripheral blood leukocytes.

The protein localises to the golgi apparatus. Its subcellular location is the golgi stack membrane. In terms of biological role, may be involved in maintaining Golgi structure. This Homo sapiens (Human) protein is Golgin subfamily A member 8B (GOLGA8B).